The primary structure comprises 646 residues: UvrABC system protein C (646 aa).

The region spanning 16–95 (VEPGVYRFRD…IKEFDPRFNV (80 aa)) is the GIY-YIG domain. The UVR domain maps to 208-243 (DRFARALEQQMNAAAEQLDFERAARLRDDLSALKRA).

It belongs to the UvrC family. As to quaternary structure, interacts with UvrB in an incision complex.

Its subcellular location is the cytoplasm. In terms of biological role, the UvrABC repair system catalyzes the recognition and processing of DNA lesions. UvrC both incises the 5' and 3' sides of the lesion. The N-terminal half is responsible for the 3' incision and the C-terminal half is responsible for the 5' incision. This chain is UvrABC system protein C, found in Mycobacterium bovis (strain BCG / Pasteur 1173P2).